A 162-amino-acid chain; its full sequence is Ribosome maturation factor RimM (162 aa).

The region spanning 91-162 (DGSFYIDDLI…LIDVVIIEGM (72 aa)) is the PRC barrel domain.

It belongs to the RimM family. Binds ribosomal protein uS19.

It localises to the cytoplasm. In terms of biological role, an accessory protein needed during the final step in the assembly of 30S ribosomal subunit, possibly for assembly of the head region. Essential for efficient processing of 16S rRNA. May be needed both before and after RbfA during the maturation of 16S rRNA. It has affinity for free ribosomal 30S subunits but not for 70S ribosomes. The sequence is that of Ribosome maturation factor RimM from Finegoldia magna (strain ATCC 29328 / DSM 20472 / WAL 2508) (Peptostreptococcus magnus).